The sequence spans 995 residues: ATP-dependent RNA helicase DBP10 (995 aa).

The disordered stretch occupies residues 1–120; the sequence is MAGVQKRKRD…TQTGDDEDDV (120 aa). 2 stretches are compositionally biased toward acidic residues: residues 12–25 and 37–50; these read EDQDDNGSEEDDIA and SESDANDSDSEVEA. Over residues 71–81 the composition is skewed to basic and acidic residues; it reads VNNKKKAENKD. Ser101 is modified (phosphoserine). The Q motif signature appears at 137-165; it reads GSFPSFGLSKIVLNNIKRKGFRQPTPIQR. A Helicase ATP-binding domain is found at 168–340; sequence IPLILQSRDI…KAGLVNPVLV (173 aa). Position 181–188 (181–188) interacts with ATP; that stretch reads ARTGSGKT. The DEAD box signature appears at 288-291; that stretch reads DEAD. Disordered stretches follow at residues 389–427 and 889–973; these read LQNSNNEADSDSDDENDRQKKRRNFKKEKFRKQKMPAAN and GSRE…EQIR. 2 positions are modified to phosphoserine: Ser398 and Ser400. Basic residues-rich tracts occupy residues 407-422 and 914-924; these read QKKRRNFKKEKFRKQK and VRGKFKHKQMK. In terms of domain architecture, Helicase C-terminal spans 418-568; that stretch reads FRKQKMPAAN…PMYDSLVDVM (151 aa). Over residues 964–973 the composition is skewed to basic and acidic residues; the sequence is SELKSTEQIR.

It belongs to the DEAD box helicase family. DDX54/DBP10 subfamily. Interacts with RRP1 and associates with pre-ribosomal particles.

It localises to the nucleus. The protein localises to the nucleolus. The catalysed reaction is ATP + H2O = ADP + phosphate + H(+). ATP-binding RNA helicase involved in the biogenesis of 60S ribosomal subunits and is required for the normal formation of 25S and 5.8S rRNAs. In Saccharomyces cerevisiae (strain ATCC 204508 / S288c) (Baker's yeast), this protein is ATP-dependent RNA helicase DBP10 (DBP10).